We begin with the raw amino-acid sequence, 201 residues long: MRQDVSLLSTSGSQKNPLGNVKIAPGAVVCVESEIKGDVTIGPRTVVHPKARIYAEAGPIIIGEGNLIEEQAFIRNSFPENIAPDSDVEPKTMIIGTNNVFEVGCYSQAMKMGDNNVIESKAFVGRNVILTSGCIIGACCQVDTCEVIPENTVIYGSDCLRRVQTERPQPQTLQLDFLMKILPNYHHLKKTTKNISTPMKS.

Belongs to the dynactin subunits 5/6 family. Dynactin subunit 6 subfamily. As to quaternary structure, member of the pointed-end complex of the dynactin shoulder complex which contains dctn4, dctn5 and dctn6 subunits and Actr10. Within the complex dctn6 forms a heterodimer with dctn5. Interacts with plk1.

It localises to the cytoplasm. The protein resides in the cytoskeleton. Its subcellular location is the chromosome. The protein localises to the centromere. It is found in the kinetochore. In terms of biological role, part of the dynactin complex that activates the molecular motor dynein for ultra-processive transport along microtubules. The chain is Dynactin subunit 6 (dctn6) from Xenopus tropicalis (Western clawed frog).